The chain runs to 331 residues: Ketol-acid reductoisomerase (NADP(+)) (331 aa).

Residues 1-181 form the KARI N-terminal Rossmann domain; sequence MKMYYDADAD…GGTRAGVIET (181 aa). Residues 24 to 27, R47, S50, and 82 to 85 each bind NADP(+); these read YGSQ and DEKQ. Residue H107 is part of the active site. Position 133 (G133) interacts with NADP(+). The KARI C-terminal knotted domain occupies 182-327; sequence TFREETETDL…KKLRAMMPWL (146 aa). D190, E194, E226, and E230 together coordinate Mg(2+). Position 251 (S251) interacts with substrate.

Belongs to the ketol-acid reductoisomerase family. Mg(2+) serves as cofactor.

It catalyses the reaction (2R)-2,3-dihydroxy-3-methylbutanoate + NADP(+) = (2S)-2-acetolactate + NADPH + H(+). It carries out the reaction (2R,3R)-2,3-dihydroxy-3-methylpentanoate + NADP(+) = (S)-2-ethyl-2-hydroxy-3-oxobutanoate + NADPH + H(+). It participates in amino-acid biosynthesis; L-isoleucine biosynthesis; L-isoleucine from 2-oxobutanoate: step 2/4. It functions in the pathway amino-acid biosynthesis; L-valine biosynthesis; L-valine from pyruvate: step 2/4. Its function is as follows. Involved in the biosynthesis of branched-chain amino acids (BCAA). Catalyzes an alkyl-migration followed by a ketol-acid reduction of (S)-2-acetolactate (S2AL) to yield (R)-2,3-dihydroxy-isovalerate. In the isomerase reaction, S2AL is rearranged via a Mg-dependent methyl migration to produce 3-hydroxy-3-methyl-2-ketobutyrate (HMKB). In the reductase reaction, this 2-ketoacid undergoes a metal-dependent reduction by NADPH to yield (R)-2,3-dihydroxy-isovalerate. In Heliobacterium modesticaldum (strain ATCC 51547 / Ice1), this protein is Ketol-acid reductoisomerase (NADP(+)).